The following is a 610-amino-acid chain: Dihydroxy-acid dehydratase (610 aa).

Mg(2+) is bound at residue aspartate 81. Cysteine 122 provides a ligand contact to [2Fe-2S] cluster. Mg(2+)-binding residues include aspartate 123 and lysine 124. Lysine 124 carries the N6-carboxylysine modification. Cysteine 193 serves as a coordination point for [2Fe-2S] cluster. Residue glutamate 489 coordinates Mg(2+). Residue serine 515 is the Proton acceptor of the active site.

Belongs to the IlvD/Edd family. As to quaternary structure, homodimer. [2Fe-2S] cluster serves as cofactor. The cofactor is Mg(2+).

It carries out the reaction (2R)-2,3-dihydroxy-3-methylbutanoate = 3-methyl-2-oxobutanoate + H2O. The enzyme catalyses (2R,3R)-2,3-dihydroxy-3-methylpentanoate = (S)-3-methyl-2-oxopentanoate + H2O. It participates in amino-acid biosynthesis; L-isoleucine biosynthesis; L-isoleucine from 2-oxobutanoate: step 3/4. It functions in the pathway amino-acid biosynthesis; L-valine biosynthesis; L-valine from pyruvate: step 3/4. Its function is as follows. Functions in the biosynthesis of branched-chain amino acids. Catalyzes the dehydration of (2R,3R)-2,3-dihydroxy-3-methylpentanoate (2,3-dihydroxy-3-methylvalerate) into 2-oxo-3-methylpentanoate (2-oxo-3-methylvalerate) and of (2R)-2,3-dihydroxy-3-methylbutanoate (2,3-dihydroxyisovalerate) into 2-oxo-3-methylbutanoate (2-oxoisovalerate), the penultimate precursor to L-isoleucine and L-valine, respectively. The protein is Dihydroxy-acid dehydratase of Xylella fastidiosa (strain M23).